A 321-amino-acid polypeptide reads, in one-letter code: MKVRLGVDMMGGDHDPLVVWEALGEVLLSSTGEQPVEFTVFATSDVHHQLMNSPLSRSVRIVTAEDFVSMEDSLLAAVRKKRSSMALGLDALQQGDLDGFVSSGNTAALVTLARSKIPMIPAVPRPALLVSVPTLSGFAVILDVGATVSVNPDEMVGFARMGLAYRQSLSSNSNQPFTLGLLNIGSEERKGTDSHKQTFRMLRNIFGSAFLGNIESGDVFSGKVDIVVTDGFTGNVFLKTAEGLFDFLRHILGDRLEKSIKMQFDYTIYPGSIISGLSRLVIKCHGKSHGTALFGGISGAIDLARANVCSRIADRFGDNVV.

Belongs to the PlsX family. As to quaternary structure, homodimer. Probably interacts with PlsY.

The protein resides in the cytoplasm. It catalyses the reaction a fatty acyl-[ACP] + phosphate = an acyl phosphate + holo-[ACP]. It participates in lipid metabolism; phospholipid metabolism. Functionally, catalyzes the reversible formation of acyl-phosphate (acyl-PO(4)) from acyl-[acyl-carrier-protein] (acyl-ACP). This enzyme utilizes acyl-ACP as fatty acyl donor, but not acyl-CoA. The polypeptide is Phosphate acyltransferase (Chlamydia trachomatis serovar L2 (strain ATCC VR-902B / DSM 19102 / 434/Bu)).